Here is a 245-residue protein sequence, read N- to C-terminus: Dof zinc finger protein DOF3.2 (245 aa).

Over residues 15 to 26 the composition is skewed to polar residues; that stretch reads SCSTQDYQNQKK. The interval 15-41 is disordered; sequence SCSTQDYQNQKKPLSATRPAPPEQSLR. The Dof-type zinc-finger motif lies at 40-94; that stretch reads LRCPRCDSTNTKFCYYNNYSLSQPRYFCKSCRRYWTKGGILRNIPIGGAYRKHKR. Residues C42, C45, C67, and C70 each contribute to the Zn(2+) site. A disordered region spans residues 91–118; that stretch reads KHKRSSSATKSLRTTPEPTMTHDGKSFP. Positions 96–108 are enriched in polar residues; that stretch reads SSATKSLRTTPEP.

As to quaternary structure, interacts with TCP14. The PEAR proteins (e.g. DOF2.4, DOF5.1, DOF3.2, DOF1.1, DOF5.6 and DOF5.3) form a short-range concentration gradient that peaks at protophloem sieve elements (PSE).

It localises to the nucleus. Functionally, transcription factor that negatively affects seed germination and opposes TCP14 function in the regulation of a specific set of abscisic acid-related genes. The PEAR proteins (e.g. DOF2.4, DOF5.1, DOF3.2, DOF1.1, DOF5.6 and DOF5.3) activate gene expression that promotes radial growth of protophloem sieve elements. This chain is Dof zinc finger protein DOF3.2, found in Arabidopsis thaliana (Mouse-ear cress).